Consider the following 144-residue polypeptide: Gastric inhibitory polypeptide (144 aa).

Residues 1-21 form the signal peptide; that stretch reads MVALKTCSLLLVLLFLAVGLG. 2 propeptides span residues 22-42 and 87-144; these read EKEEVEFRSHAKFAGPRPRGP and EARA…LRSQ. The segment at 94–113 is disordered; the sequence is AGQSQGKEDKEAQESSLPKS.

It belongs to the glucagon family.

The protein localises to the secreted. Its function is as follows. Potent stimulator of insulin secretion and relatively poor inhibitor of gastric acid secretion. This is Gastric inhibitory polypeptide (Gip) from Mus musculus (Mouse).